Reading from the N-terminus, the 526-residue chain is Glucose-6-phosphate isomerase (526 aa).

The active-site Proton donor is the Glu-320. Active-site residues include His-349 and Lys-453.

The protein belongs to the GPI family.

It localises to the cytoplasm. The catalysed reaction is alpha-D-glucose 6-phosphate = beta-D-fructose 6-phosphate. It functions in the pathway carbohydrate biosynthesis; gluconeogenesis. The protein operates within carbohydrate degradation; glycolysis; D-glyceraldehyde 3-phosphate and glycerone phosphate from D-glucose: step 2/4. Its function is as follows. Catalyzes the reversible isomerization of glucose-6-phosphate to fructose-6-phosphate. This chain is Glucose-6-phosphate isomerase, found in Rippkaea orientalis (strain PCC 8801 / RF-1) (Cyanothece sp. (strain PCC 8801)).